A 904-amino-acid polypeptide reads, in one-letter code: E3 ubiquitin-protein ligase HACE1 (904 aa).

ANK repeat units follow at residues 34 to 63, 68 to 97, 101 to 130, 134 to 163, 167 to 196, 200 to 230, and 232 to 261; these read AVYT…DVNY, VKRS…NPNY, SGCT…DVNI, EGLT…NVDV, MGQT…DINR, SGAT…YLPD, and NGVT…RLFQ. Residues 569 to 904 form the HECT domain; the sequence is SNEKLKQGIA…HCGSYGYTMA (336 aa). The active-site Glycyl thioester intermediate is the Cys-871.

The protein localises to the golgi apparatus. It localises to the golgi stack membrane. It is found in the cytoplasm. Its subcellular location is the endoplasmic reticulum. The enzyme catalyses S-ubiquitinyl-[E2 ubiquitin-conjugating enzyme]-L-cysteine + [acceptor protein]-L-lysine = [E2 ubiquitin-conjugating enzyme]-L-cysteine + N(6)-ubiquitinyl-[acceptor protein]-L-lysine.. It functions in the pathway protein modification; protein ubiquitination. Its function is as follows. E3 ubiquitin-protein ligase involved in Golgi membrane fusion and regulation of small GTPases. Acts as a regulator of Golgi membrane dynamics during the cell cycle: recruited to Golgi membrane by Rab proteins and regulates postmitotic Golgi membrane fusion. Acts by mediating ubiquitination during mitotic Golgi disassembly, ubiquitination serving as a signal for Golgi reassembly later, after cell division. The protein is E3 ubiquitin-protein ligase HACE1 (hace1) of Danio rerio (Zebrafish).